A 227-amino-acid chain; its full sequence is Response regulator protein TodT (227 aa).

One can recognise a Response regulatory domain in the interval 28–142; that stretch reads VIYILDDDNA…ELLGAIRAAL (115 aa). Asp77 carries the 4-aspartylphosphate modification. The region spanning 158 to 223 is the HTH luxR-type domain; the sequence is LKENYESLSK…DLVRVTERLK (66 aa). A DNA-binding region (H-T-H motif) is located at residues 182–201; it reads NKQTALELDISEATVKVHRH.

Post-translationally, phosphorylated by TodS.

It is found in the cytoplasm. Functionally, member of the two-component regulatory system TodS/TodT involved in the regulation of toluene degradation. Phosphorylated TodT activates transcription of the tod operon (todXFC1C2BADEGIH). Binds specifically to a 6-bp palindromic DNA structure in the tod promoter region. This Pseudomonas putida (strain ATCC 700007 / DSM 6899 / JCM 31910 / BCRC 17059 / LMG 24140 / F1) protein is Response regulator protein TodT (todT).